A 736-amino-acid polypeptide reads, in one-letter code: Na(+)/H(+) antiporter NhaA (736 aa).

The na(+)/H(+) antiporter NhaA stretch occupies residues 1-387 (MNHSPQSARP…ICGYLLLRAA (387 aa)). 11 helical membrane passes run 23-43 (AGGI…NSPF), 58-78 (LSLA…LVGL), 96-116 (MLPG…FAVL), 126-146 (GWAV…SLLG), 155-175 (VFLA…IAIF), 178-198 (AEIS…LFVM), 201-221 (MDVV…FFVF), 265-285 (VAFI…FKGL), 298-318 (ILLG…WLAI), 334-354 (LYGV…IGLL), and 367-387 (IGVL…LRAA). Residues 388 to 736 (RPDQSAANPL…EKAIWARYGL (349 aa)) form a peptidase S49 region.

In the N-terminal section; belongs to the NhaA Na(+)/H(+) (TC 2.A.33) antiporter family. The protein in the C-terminal section; belongs to the peptidase S49 family.

The protein resides in the cell inner membrane. It carries out the reaction Na(+)(in) + 2 H(+)(out) = Na(+)(out) + 2 H(+)(in). Na(+)/H(+) antiporter that extrudes sodium in exchange for external protons. In Brucella melitensis biotype 1 (strain ATCC 23456 / CCUG 17765 / NCTC 10094 / 16M), this protein is Na(+)/H(+) antiporter NhaA.